A 540-amino-acid chain; its full sequence is Phenylalanine--tRNA ligase beta subunit (540 aa).

The 77-residue stretch at 266–342 folds into the B5 domain; sequence LRPEKRTVSV…IAYGYDKIET (77 aa). D320, D326, E329, and D330 together coordinate Mg(2+).

The protein belongs to the phenylalanyl-tRNA synthetase beta subunit family. Type 2 subfamily. As to quaternary structure, tetramer of two alpha and two beta subunits. Mg(2+) is required as a cofactor.

It localises to the cytoplasm. The enzyme catalyses tRNA(Phe) + L-phenylalanine + ATP = L-phenylalanyl-tRNA(Phe) + AMP + diphosphate + H(+). The sequence is that of Phenylalanine--tRNA ligase beta subunit from Methanocorpusculum labreanum (strain ATCC 43576 / DSM 4855 / Z).